The sequence spans 503 residues: Arabinose import ATP-binding protein AraG 1 (503 aa).

ABC transporter domains lie at 5–240 and 253–497; these read LRFD…MVGR and LGDV…LPQG. 37 to 44 contributes to the ATP binding site; sequence GENGAGKS.

Belongs to the ABC transporter superfamily. Arabinose importer (TC 3.A.1.2.2) family. As to quaternary structure, the complex is composed of two ATP-binding proteins (AraG), two transmembrane proteins (AraH) and a solute-binding protein (AraF).

The protein resides in the cell inner membrane. The enzyme catalyses L-arabinose(out) + ATP + H2O = L-arabinose(in) + ADP + phosphate + H(+). Functionally, part of the ABC transporter complex AraFGH involved in arabinose import. Responsible for energy coupling to the transport system. The polypeptide is Arabinose import ATP-binding protein AraG 1 (Burkholderia thailandensis (strain ATCC 700388 / DSM 13276 / CCUG 48851 / CIP 106301 / E264)).